A 427-amino-acid chain; its full sequence is Glutamate-1-semialdehyde 2,1-aminomutase (427 aa).

K265 carries the post-translational modification N6-(pyridoxal phosphate)lysine.

It belongs to the class-III pyridoxal-phosphate-dependent aminotransferase family. HemL subfamily. As to quaternary structure, homodimer. Pyridoxal 5'-phosphate serves as cofactor.

The protein localises to the cytoplasm. The enzyme catalyses (S)-4-amino-5-oxopentanoate = 5-aminolevulinate. Its pathway is porphyrin-containing compound metabolism; protoporphyrin-IX biosynthesis; 5-aminolevulinate from L-glutamyl-tRNA(Glu): step 2/2. In Burkholderia multivorans (strain ATCC 17616 / 249), this protein is Glutamate-1-semialdehyde 2,1-aminomutase.